Reading from the N-terminus, the 199-residue chain is Thioredoxin peroxidase (199 aa).

A Thioredoxin domain is found at 6-165 (AKLNHPAPHF…TLRLVKAFQF (160 aa)). Catalysis depends on cysteine 52, which acts as the Cysteine sulfenic acid (-SOH) intermediate. Residues 179 to 199 (PGSKTMKADPNGSQDYFSSMN) are disordered. A compositionally biased stretch (polar residues) spans 189–199 (NGSQDYFSSMN).

The protein belongs to the peroxiredoxin family. AhpC/Prx1 subfamily. Homodimer; disulfide-linked, upon oxidation.

The enzyme catalyses a hydroperoxide + [thioredoxin]-dithiol = an alcohol + [thioredoxin]-disulfide + H2O. Thiol-specific peroxidase that catalyzes the reduction of hydrogen peroxide and organic hydroperoxides to water and alcohols, respectively. Plays a role in cell protection against oxidative stress by detoxifying peroxides and as sensor of hydrogen peroxide-mediated signaling events. In Trypanosoma brucei rhodesiense, this protein is Thioredoxin peroxidase.